Here is a 359-residue protein sequence, read N- to C-terminus: ATP-dependent (S)-NAD(P)H-hydrate dehydratase (359 aa).

The YjeF C-terminal domain maps to 61–350; it reads LLEEARKVVP…SEINSVFVNN (290 aa). (6S)-NADPHX is bound by residues glycine 161 and 214–220; that span reads NVVEFQR. ATP contacts are provided by residues 256 to 260 and 275 to 284; these read KGEVD and GSPRRCGGQG. Aspartate 285 provides a ligand contact to (6S)-NADPHX.

This sequence belongs to the NnrD/CARKD family. The cofactor is Mg(2+).

It catalyses the reaction (6S)-NADHX + ATP = ADP + phosphate + NADH + H(+). The enzyme catalyses (6S)-NADPHX + ATP = ADP + phosphate + NADPH + H(+). Its function is as follows. Catalyzes the dehydration of the S-form of NAD(P)HX at the expense of ATP, which is converted to ADP. Together with NAD(P)HX epimerase, which catalyzes the epimerization of the S- and R-forms, the enzyme allows the repair of both epimers of NAD(P)HX, a damaged form of NAD(P)H that is a result of enzymatic or heat-dependent hydration. The sequence is that of ATP-dependent (S)-NAD(P)H-hydrate dehydratase from Ciona intestinalis (Transparent sea squirt).